We begin with the raw amino-acid sequence, 200 residues long: ATP-dependent Clp protease proteolytic subunit (200 aa).

The active-site Nucleophile is the Ser-102. His-127 is an active-site residue.

This sequence belongs to the peptidase S14 family. As to quaternary structure, fourteen ClpP subunits assemble into 2 heptameric rings which stack back to back to give a disk-like structure with a central cavity, resembling the structure of eukaryotic proteasomes.

It is found in the cytoplasm. The enzyme catalyses Hydrolysis of proteins to small peptides in the presence of ATP and magnesium. alpha-casein is the usual test substrate. In the absence of ATP, only oligopeptides shorter than five residues are hydrolyzed (such as succinyl-Leu-Tyr-|-NHMec, and Leu-Tyr-Leu-|-Tyr-Trp, in which cleavage of the -Tyr-|-Leu- and -Tyr-|-Trp bonds also occurs).. Cleaves peptides in various proteins in a process that requires ATP hydrolysis. Has a chymotrypsin-like activity. Plays a major role in the degradation of misfolded proteins. The polypeptide is ATP-dependent Clp protease proteolytic subunit (Dehalococcoides mccartyi (strain ATCC BAA-2100 / JCM 16839 / KCTC 5957 / BAV1)).